The sequence spans 458 residues: tRNA modification GTPase MnmE (458 aa).

(6S)-5-formyl-5,6,7,8-tetrahydrofolate contacts are provided by arginine 22, glutamate 84, and arginine 123. Residues 220–379 (GIATAIIGRP…LEKAIADLFF (160 aa)) enclose the TrmE-type G domain. Asparagine 230 contacts K(+). Residues 230–235 (NVGKSS), 249–255 (TDIAGTT), and 274–277 (DTAG) contribute to the GTP site. Serine 234 contacts Mg(2+). Residues threonine 249, isoleucine 251, and threonine 254 each coordinate K(+). A Mg(2+)-binding site is contributed by threonine 255. Lysine 458 contributes to the (6S)-5-formyl-5,6,7,8-tetrahydrofolate binding site.

Belongs to the TRAFAC class TrmE-Era-EngA-EngB-Septin-like GTPase superfamily. TrmE GTPase family. In terms of assembly, homodimer. Heterotetramer of two MnmE and two MnmG subunits. It depends on K(+) as a cofactor.

Its subcellular location is the cytoplasm. Functionally, exhibits a very high intrinsic GTPase hydrolysis rate. Involved in the addition of a carboxymethylaminomethyl (cmnm) group at the wobble position (U34) of certain tRNAs, forming tRNA-cmnm(5)s(2)U34. The polypeptide is tRNA modification GTPase MnmE (Bacillus cereus (strain ZK / E33L)).